The following is a 211-amino-acid chain: ATP-dependent Clp protease proteolytic subunit (211 aa).

The Nucleophile role is filled by serine 107. Residue histidine 132 is part of the active site.

It belongs to the peptidase S14 family. Fourteen ClpP subunits assemble into 2 heptameric rings which stack back to back to give a disk-like structure with a central cavity, resembling the structure of eukaryotic proteasomes.

It localises to the cytoplasm. It catalyses the reaction Hydrolysis of proteins to small peptides in the presence of ATP and magnesium. alpha-casein is the usual test substrate. In the absence of ATP, only oligopeptides shorter than five residues are hydrolyzed (such as succinyl-Leu-Tyr-|-NHMec, and Leu-Tyr-Leu-|-Tyr-Trp, in which cleavage of the -Tyr-|-Leu- and -Tyr-|-Trp bonds also occurs).. In terms of biological role, cleaves peptides in various proteins in a process that requires ATP hydrolysis. Has a chymotrypsin-like activity. Plays a major role in the degradation of misfolded proteins. The polypeptide is ATP-dependent Clp protease proteolytic subunit (Xanthobacter autotrophicus (strain ATCC BAA-1158 / Py2)).